The primary structure comprises 203 residues: MVKVKICGLRRLEDIYYANQLQPDFIGFVFSESKRRVDLKEALEFVKRLKEGIKKVGVFVNEPVEKVMEIAEKLKLDVLQFHGDETQEYIDNFKNFTVWKAIRIRSKLDLKKTGEFKVDAFLFDSFSEKGYGGTGEAFDWNILKAYKREIPVVLSGGLKEENVEEAIKLVRPYAVDVSSGVEVGGYKDFNKMKSFIEKVRGVV.

The protein belongs to the TrpF family.

The catalysed reaction is N-(5-phospho-beta-D-ribosyl)anthranilate = 1-(2-carboxyphenylamino)-1-deoxy-D-ribulose 5-phosphate. Its pathway is amino-acid biosynthesis; L-tryptophan biosynthesis; L-tryptophan from chorismate: step 3/5. This Caldanaerobacter subterraneus subsp. tengcongensis (strain DSM 15242 / JCM 11007 / NBRC 100824 / MB4) (Thermoanaerobacter tengcongensis) protein is N-(5'-phosphoribosyl)anthranilate isomerase.